The sequence spans 368 residues: Phosphate acyltransferase (368 aa).

The protein belongs to the PlsX family. In terms of assembly, homodimer. Probably interacts with PlsY.

The protein localises to the cytoplasm. It catalyses the reaction a fatty acyl-[ACP] + phosphate = an acyl phosphate + holo-[ACP]. The protein operates within lipid metabolism; phospholipid metabolism. Catalyzes the reversible formation of acyl-phosphate (acyl-PO(4)) from acyl-[acyl-carrier-protein] (acyl-ACP). This enzyme utilizes acyl-ACP as fatty acyl donor, but not acyl-CoA. This chain is Phosphate acyltransferase, found in Cereibacter sphaeroides (strain ATCC 17025 / ATH 2.4.3) (Rhodobacter sphaeroides).